We begin with the raw amino-acid sequence, 329 residues long: GTPase Obg (329 aa).

Residues 1 to 159 form the Obg domain; the sequence is MQFIDEAKIF…MWVWLHLKLL (159 aa). The 168-residue stretch at 160-327 folds into the OBG-type G domain; it reads SDVGLVGLPN…LLANILSELQ (168 aa). Residues 166–173, 191–195, 212–215, 279–282, and 308–310 contribute to the GTP site; these read GLPNAGKS, FTTLT, DIPG, TKTD, and SSY. Positions 173 and 193 each coordinate Mg(2+).

The protein belongs to the TRAFAC class OBG-HflX-like GTPase superfamily. OBG GTPase family. As to quaternary structure, monomer. Requires Mg(2+) as cofactor.

It localises to the cytoplasm. An essential GTPase which binds GTP, GDP and possibly (p)ppGpp with moderate affinity, with high nucleotide exchange rates and a fairly low GTP hydrolysis rate. Plays a role in control of the cell cycle, stress response, ribosome biogenesis and in those bacteria that undergo differentiation, in morphogenesis control. The protein is GTPase Obg of Orientia tsutsugamushi (strain Boryong) (Rickettsia tsutsugamushi).